The chain runs to 777 residues: Cyclin-F (777 aa).

The Nuclear localization signal 1 motif lies at 20 to 28 (KRRIKRRPR). The F-box domain occupies 29-76 (NLTILSLPEDVLFHILKWLSVGDILAVRAVHSHLKYLVDNHASVWASA). The Cyclin N-terminal domain maps to 288 to 405 (QASQAVNKQQ…EIISALEGKI (118 aa)). 3 consecutive short sequence motifs (d box) follow at residues 310–313 (RYIL), 343–346 (RRRL), and 349–352 (RYKL). Disordered stretches follow at residues 544 to 591 (QESP…TPTA) and 651 to 777 (QESS…HLAS). Residues 568-574 (RRSKRKR) carry the Nuclear localization signal 2 motif. The segment at 582–761 (RGSFVTTPTA…ESGVHQQPVK (180 aa)) is PEST. Low complexity-rich tracts occupy residues 695 to 708 (SGYSSVSSSSPISS) and 719 to 731 (STSVLSVGSHSST). Polar residues predominate over residues 751–767 (PESGVHQQPVKRQNLSV). Positions 762-765 (RQNL) match the D box 4 motif. The span at 768–777 (HSDKDMHLAS) shows a compositional bias: basic and acidic residues.

It belongs to the cyclin family. Cyclin AB subfamily. Component of the SCF(CCNF) complex consisting of CUL1, RBX1, SKP1 and CCNF. Interacts with SKP1. Interacts with CUL1. Interacts with CCNB1; interaction is required for nuclear localization of CCNB1. Interacts with CCP110; this interaction leads to CCP110 ubiquitination and degradation via the proteasome pathway. Interacts (via the Cyclin N-terminal domain) with MYBL2/BMYB. Interacts with FZR1/CDH1 (via N-terminus). Interacts with RRM2 (via Cy motif and when phosphorylated at 'Thr-33'); the interaction occurs exclusively in G2 and early M. Interacts with CDC6 (via Cy motif); the interaction takes place during G2 and M phase. Post-translationally, degraded when the spindle assembly checkpoint is activated during the G2-M transition. Degradation is not dependent on the proteasome or ubiquitin and depends on the C-terminal PEST sequence. Phosphorylated just before cells enter into mitosis. In terms of processing, ubiquitinated by the anaphase-promoting complex (APC/C); leading to its degradation by the proteasome.

Its subcellular location is the nucleus. The protein resides in the cytoplasm. The protein localises to the perinuclear region. It is found in the cytoskeleton. It localises to the microtubule organizing center. Its subcellular location is the centrosome. The protein resides in the centriole. In terms of biological role, substrate recognition component of a SCF (SKP1-CUL1-F-box protein) E3 ubiquitin-protein ligase complex which mediates the ubiquitination and subsequent proteasomal degradation of target proteins. The SCF(CCNF) E3 ubiquitin-protein ligase complex is an integral component of the ubiquitin proteasome system (UPS) and links proteasome degradation to the cell cycle. Mediates the substrate recognition and the proteasomal degradation of various target proteins involved in the regulation of cell cycle progression and in the maintenance of genome stability. Mediates the ubiquitination and subsequent proteasomal degradation of CP110 during G2 phase, thereby acting as an inhibitor of centrosome reduplication. In G2, mediates the ubiquitination and proteasomal degradation of CDC6, thereby suppressing DNA re-replication and preventing genome instability. Involved in the ubiquitination and degradation of the substrate adapter CDH1 of the anaphase-promoting complex (APC/C), thereby acting as an antagonist of APC/C in regulating G1 progression and S phase entry. May play a role in the G2 cell cycle checkpoint control after DNA damage, possibly by promoting the ubiquitination of MYBL2/BMYB. The protein is Cyclin-F (Ccnf) of Mus musculus (Mouse).